Reading from the N-terminus, the 603-residue chain is Aquaporin-2 (603 aa).

Residues Ser40–Asn70 traverse the membrane as a helical segment. Basic and acidic residues-rich tracts occupy residues Asn135–Ile149 and Glu156–Lys190. Residues Asn135–Asp200 form a disordered region. Residues Asn191–Asp200 show a composition bias toward polar residues. Helical transmembrane passes span His282–Leu299, Phe321–Tyr346, Ile360–Lys393, Asn442–Thr471, and Ile509–Leu542.

Belongs to the MIP/aquaporin (TC 1.A.8) family.

The protein localises to the endomembrane system. It catalyses the reaction H2O(in) = H2O(out). It carries out the reaction glycerol(in) = glycerol(out). Functionally, required for sporozoite development in the mosquito vector. The chain is Aquaporin-2 from Plasmodium falciparum (isolate NF54).